Reading from the N-terminus, the 437-residue chain is UDP-N-acetylmuramate--L-alanine ligase (437 aa).

Residue 114–120 (GTHGKTS) participates in ATP binding.

The protein belongs to the MurCDEF family.

Its subcellular location is the cytoplasm. It carries out the reaction UDP-N-acetyl-alpha-D-muramate + L-alanine + ATP = UDP-N-acetyl-alpha-D-muramoyl-L-alanine + ADP + phosphate + H(+). The protein operates within cell wall biogenesis; peptidoglycan biosynthesis. Cell wall formation. The sequence is that of UDP-N-acetylmuramate--L-alanine ligase from Lactobacillus johnsonii (strain CNCM I-12250 / La1 / NCC 533).